A 524-amino-acid chain; its full sequence is uncharacterized protein (524 aa).

Residues 1–65 (MSDPFFTRPE…IDEENEDTYE (65 aa)) form a disordered region. The segment covering 21-32 (SKREKENQKLER) has biased composition (basic and acidic residues). The segment covering 51-64 (GFEDEIDEENEDTY) has biased composition (acidic residues). WD repeat units follow at residues 131-176 (IETA…DTEN), 206-245 (DHVK…PQHC), 248-287 (HHRD…YIET), 290-329 (GHQD…QLVF), 342-380 (YMEG…PLFT), 409-448 (PQPR…RSFE), and 457-503 (SVYG…PNSG).

Its subcellular location is the nucleus. This is an uncharacterized protein from Schizosaccharomyces pombe (strain 972 / ATCC 24843) (Fission yeast).